The primary structure comprises 148 residues: Snaclec alboaggregin-D subunit beta (148 aa).

A signal peptide spans 1–23 (MGRFISVSFGLLVVFLSLSGAGA). The cysteines at positions 27 and 38 are disulfide-linked. Residues 34–145 (YDLYCYKVFK…CNSTYSFVCK (112 aa)) form the C-type lectin domain. A glycan (N-linked (GlcNAc...) asparagine) is linked at asparagine 47. 2 disulfides stabilise this stretch: cysteine 55/cysteine 144 and cysteine 121/cysteine 136. A glycan (N-linked (GlcNAc...) asparagine) is linked at asparagine 137.

Tetramer of heterodimers of alpha and beta subunits (alphabeta)(4); disulfide-linked. As to expression, expressed by the venom gland.

Its subcellular location is the secreted. Snaclec that induces human platelet aggregation in the absence of any cofactor with the EC(50) of 0.25 nM and causes tyrosine phosphorylation in human platelets. Antibodies against either platelet GPIbalpha (GP1BA) or GPVI (GP6) inhibit alboaggregin D-induced platelet aggregation. Only the combination of these two antibodies completely inhibit aggregation, suggesting that it acts through both GPIbalpha (GP1BA) and GPVI (GP6). This chain is Snaclec alboaggregin-D subunit beta, found in Trimeresurus albolabris (White-lipped pit viper).